A 435-amino-acid polypeptide reads, in one-letter code: Methylenetetrahydrofolate--tRNA-(uracil-5-)-methyltransferase TrmFO (435 aa).

9–14 (GGGLAG) is an FAD binding site.

The protein belongs to the MnmG family. TrmFO subfamily. The cofactor is FAD.

The protein resides in the cytoplasm. The catalysed reaction is uridine(54) in tRNA + (6R)-5,10-methylene-5,6,7,8-tetrahydrofolate + NADH + H(+) = 5-methyluridine(54) in tRNA + (6S)-5,6,7,8-tetrahydrofolate + NAD(+). The enzyme catalyses uridine(54) in tRNA + (6R)-5,10-methylene-5,6,7,8-tetrahydrofolate + NADPH + H(+) = 5-methyluridine(54) in tRNA + (6S)-5,6,7,8-tetrahydrofolate + NADP(+). Catalyzes the folate-dependent formation of 5-methyl-uridine at position 54 (M-5-U54) in all tRNAs. In Geobacter sp. (strain M21), this protein is Methylenetetrahydrofolate--tRNA-(uracil-5-)-methyltransferase TrmFO.